The following is a 76-amino-acid chain: Conotoxin Bu28 (76 aa).

The signal sequence occupies residues 1–24; it reads MTSVQSATCCCLLWLVLCVQLVTP. The propeptide occupies 25-39; the sequence is DSPATAQLSRHLTAR. Intrachain disulfides connect C50/C63 and C54/C65. An Arginine amide modification is found at R69. Residues 71-76 constitute a propeptide that is removed on maturation; that stretch reads VVSSSI.

It belongs to the conotoxin J superfamily. In terms of tissue distribution, expressed by the venom duct.

It localises to the secreted. In terms of biological role, highly inhibits both nicotinic acetylcholine receptors (neuronal (alpha-3/beta-4) and muscular (alpha-1/beta-1/epsilon/delta) subtypes) and the voltage-gated potassium channel Kv1.6/KCNA6 subtype. The sequence is that of Conotoxin Bu28 from Conus bullatus (Bubble cone).